The primary structure comprises 292 residues: Malonyl-[acyl-carrier protein] O-methyltransferase (292 aa).

Belongs to the methyltransferase superfamily.

The enzyme catalyses malonyl-[ACP] + S-adenosyl-L-methionine = malonyl-[ACP] methyl ester + S-adenosyl-L-homocysteine. It functions in the pathway cofactor biosynthesis; biotin biosynthesis. Functionally, converts the free carboxyl group of a malonyl-thioester to its methyl ester by transfer of a methyl group from S-adenosyl-L-methionine (SAM). It allows to synthesize pimeloyl-ACP via the fatty acid synthetic pathway. This Alcanivorax borkumensis (strain ATCC 700651 / DSM 11573 / NCIMB 13689 / SK2) protein is Malonyl-[acyl-carrier protein] O-methyltransferase.